A 161-amino-acid chain; its full sequence is Large ribosomal subunit protein uL15 (161 aa).

Positions 1–43 (MKLSDIADNAGARKKRMRVGRGIGSGKGKTSGRGGKGQTARSG) are disordered. Gly residues predominate over residues 21–37 (RGIGSGKGKTSGRGGKG).

The protein belongs to the universal ribosomal protein uL15 family. Part of the 50S ribosomal subunit.

Its function is as follows. Binds to the 23S rRNA. The chain is Large ribosomal subunit protein uL15 from Bradyrhizobium sp. (strain ORS 278).